Consider the following 389-residue polypeptide: Alpha-2B adrenergic receptor (389 aa).

A helical membrane pass occupies residues 1–25 (AIAAVITFLILFTIFGNALVILAVL). Topologically, residues 26 to 36 (TSRSLRAPQNL) are cytoplasmic. A helical transmembrane segment spans residues 37 to 62 (FLVSLAAADILVATLIIPFSLANELL). Residues 63-72 (GYWYFWRTWC) lie on the Extracellular side of the membrane. A disulfide bridge links Cys-72 with Cys-151. Residues 73–95 (EVYLALDVLFCTSSIVHLCAISL) traverse the membrane as a helical segment. Residues 96-117 (DRYWAVSRALEYNSKRTPRRIK) lie on the Cytoplasmic side of the membrane. A helical transmembrane segment spans residues 118-140 (CIILTVWLIAAAISLPPLIYKGD). Topologically, residues 141–156 (QGPQPRGRPQCMLNQE) are extracellular. Residues 157–180 (AWYILSSSIGSFFAPCLIMILVYL) form a helical membrane-spanning segment. At 181 to 353 (RIYLIAKRSN…LTREKRFTFV (173 aa)) the chain is on the cytoplasmic side. 2 disordered regions span residues 192 to 218 (RGPRAKGAPGEGESKQPHPLTAGPLAL) and 231 to 310 (DGEA…HLQQ). Residues 234 to 249 (ANGHSKLTGEKERETS) show a composition bias toward basic and acidic residues. The helical transmembrane segment at 354–377 (LTVVIGVFVLCWFPFFFSYSLGAI) threads the bilayer. The Extracellular portion of the chain corresponds to 378-386 (CPQHCKVPH). A helical transmembrane segment spans residues 387–389 (GLF).

This sequence belongs to the G-protein coupled receptor 1 family. Adrenergic receptor subfamily. ADRA2B sub-subfamily. In terms of assembly, interacts with RAB26. Interacts with PPP1R9B.

The protein resides in the cell membrane. In terms of biological role, alpha-2 adrenergic receptors mediate the catecholamine-induced inhibition of adenylate cyclase through the action of G proteins. In Procavia capensis habessinica (Abyssinian hyrax), this protein is Alpha-2B adrenergic receptor (ADRA2B).